The sequence spans 194 residues: Nucleoside triphosphate pyrophosphatase (194 aa).

The active-site Proton acceptor is Asp71.

The protein belongs to the Maf family. Requires a divalent metal cation as cofactor.

It is found in the cytoplasm. The catalysed reaction is a ribonucleoside 5'-triphosphate + H2O = a ribonucleoside 5'-phosphate + diphosphate + H(+). It carries out the reaction a 2'-deoxyribonucleoside 5'-triphosphate + H2O = a 2'-deoxyribonucleoside 5'-phosphate + diphosphate + H(+). Functionally, nucleoside triphosphate pyrophosphatase. May have a dual role in cell division arrest and in preventing the incorporation of modified nucleotides into cellular nucleic acids. The protein is Nucleoside triphosphate pyrophosphatase of Paramagnetospirillum magneticum (strain ATCC 700264 / AMB-1) (Magnetospirillum magneticum).